The following is a 314-amino-acid chain: Hydroxyacyl-coenzyme A dehydrogenase, mitochondrial (314 aa).

A mitochondrion-targeting transit peptide spans 1 to 12; the sequence is MAFATRQLVRSL. Residues 34–39 and Asp57 contribute to the NAD(+) site; that span reads GGGLMG. 2 residues coordinate CoA: Ser73 and Lys80. At Lys80 the chain carries N6-succinyllysine. 2 positions are modified to N6-acetyllysine; alternate: Lys81 and Lys87. 2 positions are modified to N6-succinyllysine; alternate: Lys81 and Lys87. Glu122 lines the NAD(+) pocket. Lys125 is modified (N6-acetyllysine). Position 127 (Lys127) interacts with NAD(+). Lys127 is subject to N6-(2-hydroxyisobutyryl)lysine. Lys136 is modified (N6-acetyllysine; alternate). N6-succinyllysine; alternate is present on Lys136. Residues Ser149 and Asn173 each coordinate NAD(+). Ser149 contributes to the CoA binding site. The residue at position 179 (Lys179) is an N6-acetyllysine. Lys185, Lys192, and Lys202 each carry N6-acetyllysine; alternate. An N6-succinyllysine; alternate mark is found at Lys185, Lys192, and Lys202. Lys206 bears the N6-succinyllysine mark. N6-acetyllysine; alternate is present on residues Lys212 and Lys241. N6-succinyllysine; alternate occurs at positions 212 and 241. Lys305 contributes to the NAD(+) binding site. Residue Lys312 is modified to N6-acetyllysine; alternate. The residue at position 312 (Lys312) is an N6-succinyllysine; alternate.

It belongs to the 3-hydroxyacyl-CoA dehydrogenase family. In terms of assembly, homodimer. Interacts with GLUD1; this interaction inhibits the activation of glutamate dehydrogenase 1 (GLUD1). Succinylation at Lys-81, adjacent to a coenzyme A binding site. Desuccinylated by SIRT5.

Its subcellular location is the mitochondrion matrix. The enzyme catalyses a (3S)-3-hydroxyacyl-CoA + NAD(+) = a 3-oxoacyl-CoA + NADH + H(+). The catalysed reaction is (3S)-3-hydroxybutanoyl-CoA + NAD(+) = acetoacetyl-CoA + NADH + H(+). It carries out the reaction (3S)-hydroxydecanoyl-CoA + NAD(+) = 3-oxodecanoyl-CoA + NADH + H(+). It catalyses the reaction (3S)-hydroxyhexadecanoyl-CoA + NAD(+) = 3-oxohexadecanoyl-CoA + NADH + H(+). Its pathway is lipid metabolism; fatty acid beta-oxidation. Mitochondrial fatty acid beta-oxidation enzyme that catalyzes the third step of the beta-oxidation cycle for medium and short-chain 3-hydroxy fatty acyl-CoAs (C4 to C10). Plays a role in the control of insulin secretion by inhibiting the activation of glutamate dehydrogenase 1 (GLUD1), an enzyme that has an important role in regulating amino acid-induced insulin secretion. Plays a role in the maintenance of normal spermatogenesis through the reduction of fatty acid accumulation in the testes. This is Hydroxyacyl-coenzyme A dehydrogenase, mitochondrial (HADH) from Sus scrofa (Pig).